Consider the following 340-residue polypeptide: NADH-quinone oxidoreductase subunit H 2 (340 aa).

The next 8 helical transmembrane spans lie at 10 to 30 (LIVA…ILLL), 84 to 104 (FLFK…FVAI), 126 to 146 (VALL…IFGG), 172 to 192 (MGFA…LDIV), 198 to 218 (VWNI…GLAE), 255 to 275 (VIVL…WNGI), 279 to 299 (MPPL…FIWF), and 318 to 338 (VLLP…GAAA).

This sequence belongs to the complex I subunit 1 family. NDH-1 is composed of 14 different subunits. Subunits NuoA, H, J, K, L, M, N constitute the membrane sector of the complex.

It localises to the cell inner membrane. The catalysed reaction is a quinone + NADH + 5 H(+)(in) = a quinol + NAD(+) + 4 H(+)(out). Its function is as follows. NDH-1 shuttles electrons from NADH, via FMN and iron-sulfur (Fe-S) centers, to quinones in the respiratory chain. The immediate electron acceptor for the enzyme in this species is believed to be ubiquinone. Couples the redox reaction to proton translocation (for every two electrons transferred, four hydrogen ions are translocated across the cytoplasmic membrane), and thus conserves the redox energy in a proton gradient. This subunit may bind ubiquinone. This chain is NADH-quinone oxidoreductase subunit H 2, found in Rhizobium etli (strain ATCC 51251 / DSM 11541 / JCM 21823 / NBRC 15573 / CFN 42).